Consider the following 255-residue polypeptide: MTMTTMPESLNSPVSGKAVFMEFGPPNQQMSPSPMSHGHYSMHCLHSAGHSQPDGAYSSASSFSRPLGYPYVNSVSSHASSPYISSVQSYPGSASLAQSRLEDPGADSEKSTVVEGGEVRFNGKGKKIRKPRTIYSSLQLQALNRRFQQTQYLALPERAELAASLGLTQTQVKIWFQNKRSKFKKLMKQGGAALEGSALANGRALSAGSPPVPPGWNPNSSSGKGSGGNAGSYIPSYTSWYPSAHQEAMQQPQLM.

Over residues 1 to 14 (MTMTTMPESLNSPV) the composition is skewed to polar residues. Disordered regions lie at residues 1-38 (MTMT…MSHG) and 95-118 (SLAQ…EGGE). A compositionally biased stretch (low complexity) spans 25 to 36 (PPNQQMSPSPMS). Basic and acidic residues predominate over residues 100 to 112 (RLEDPGADSEKST). Positions 128–187 (IRKPRTIYSSLQLQALNRRFQQTQYLALPERAELAASLGLTQTQVKIWFQNKRSKFKKLM) form a DNA-binding region, homeobox. The interval 204–230 (ALSAGSPPVPPGWNPNSSSGKGSGGNA) is disordered.

It belongs to the distal-less homeobox family. As to quaternary structure, interacts with SMAD4 (via homeobox DNA-binding domain). Interacts (via homeobox DNA-binding domain) with POU4F2; this interaction suppresses DLX1-mediated transcriptional activity in postnatal retina and enhances retinal ganglion cell (RGC) differentiation. In terms of tissue distribution, expressed in hematopoietic cell lines.

It localises to the nucleus. In terms of biological role, plays a role as a transcriptional activator or repressor. Inhibits several cytokine signaling pathways, such as TGFB1, activin-A/INHBA and BMP4 by interfering with the transcriptional stimulatory activity of transcription factors, such as MSX2, FAST2, SMAD2 and SMAD3 during hematopoietic cell differentiation. Plays a role in terminal differentiation of interneurons, such as amacrine and bipolar cells in the developing retina. Likely to play a regulatory role in the development of the ventral forebrain. May play a role in craniofacial patterning and morphogenesis and may be involved in the early development of diencephalic subdivisions. In Homo sapiens (Human), this protein is Homeobox protein DLX-1 (DLX1).